Reading from the N-terminus, the 980-residue chain is Putative leucine-rich repeat receptor-like serine/threonine-protein kinase At2g24130 (980 aa).

The N-terminal stretch at 1–20 is a signal peptide; sequence MDYCSLLVVSFLITVMTVLA. At 21 to 593 the chain is on the extracellular side; that stretch reads SKENDHELIK…ACKKKHKYPS (573 aa). N55 and N88 each carry an N-linked (GlcNAc...) asparagine glycan. 8 LRR repeats span residues 65–89, 90–113, 115–138, 139–162, 165–189, 191–214, 215–238, and 240–263; these read STQVIELDISGRDLGGEISPSIANL, TGLTVLDLSRNFFVGKIPPEIGSL, ETLKQLSLSENLLHGNIPQELGLL, NRLVYLDLGSNRLNGSIPVQLFCN, SSSLQYIDLSNNSLTGEIPLNYHCH, KELRFLLLWSNKLTGTVPSSLSNS, TNLKWMDLESNMLSGELPSQVISK, and PQLQFLYLSYNHFVSHNNNTNLEP. N152, N162, N175, and N213 each carry an N-linked (GlcNAc...) asparagine glycan. N-linked (GlcNAc...) asparagine glycosylation is found at N257 and N270. 12 LRR repeats span residues 271–295, 296–320, 322–344, 345–370, 372–391, 392–416, 417–440, 442–463, 464–490, 491–514, 515–537, and 539–563; these read SSDLQELELAGNSLGGEITSSVRHL, SVNLVQIHLDQNRIHGSIPPEISNL, NLTLLNLSSNLLSGPIPRELCKL, SKLERVYLSNNHLTGEIPMELGDIPR, GLLDVSRNNLSGSIPDSFGN, LSQLRRLLLYGNHLSGTVPQSLGKC, INLEILDLSHNNLTGTIPVEVVSN, RNLKLYLNLSSNHLSGPIPLEL, SKMDMVLSVDLSSNELSGKIPPQLGSC, IALEHLNLSRNGFSSTLPSSLGQL, PYLKELDVSFNRLTGAIPPSFQQ, and STLKHLNFSFNLLSGNVSDKGSFSK. N322 and N327 each carry an N-linked (GlcNAc...) asparagine glycan. N-linked (GlcNAc...) asparagine glycans are attached at residues N380 and N391. N-linked (GlcNAc...) asparagine glycosylation is found at N428 and N449. An N-linked (GlcNAc...) asparagine glycan is attached at N497. N-linked (GlcNAc...) asparagine glycans are attached at residues N545 and N554. A helical transmembrane segment spans residues 594-614; the sequence is VLLPVLLSLIATPVLCVFGYP. At 615–980 the chain is on the cytoplasmic side; it reads LVQRSRFGKN…SQETQGEASS (366 aa). A Phosphothreonine modification is found at T658. The region spanning 661–960 is the Protein kinase domain; the sequence is FNASSLIGSG…HEMGRLKEYL (300 aa). ATP is bound by residues 667–675 and K689; that span reads IGSGRFGHV. Y775 is modified (phosphotyrosine). The active-site Proton acceptor is the D788. Residue Y841 is modified to Phosphotyrosine.

It belongs to the protein kinase superfamily. Ser/Thr protein kinase family.

Its subcellular location is the cell membrane. It carries out the reaction L-seryl-[protein] + ATP = O-phospho-L-seryl-[protein] + ADP + H(+). The catalysed reaction is L-threonyl-[protein] + ATP = O-phospho-L-threonyl-[protein] + ADP + H(+). This chain is Putative leucine-rich repeat receptor-like serine/threonine-protein kinase At2g24130, found in Arabidopsis thaliana (Mouse-ear cress).